The primary structure comprises 513 residues: GMP synthase [glutamine-hydrolyzing] (513 aa).

The 192-residue stretch at 7-198 folds into the Glutamine amidotransferase type-1 domain; that stretch reads LIVVVDFGGQ…LFNIAGCRGD (192 aa). Cys-84 (nucleophile) is an active-site residue. Catalysis depends on residues His-172 and Glu-174. The 190-residue stretch at 199–388 folds into the GMPS ATP-PPase domain; sequence WTTESFITRQ…LGVPEEIVGR (190 aa). Residue 226 to 232 coordinates ATP; it reads SGGVDSS.

Homodimer.

The catalysed reaction is XMP + L-glutamine + ATP + H2O = GMP + L-glutamate + AMP + diphosphate + 2 H(+). It functions in the pathway purine metabolism; GMP biosynthesis; GMP from XMP (L-Gln route): step 1/1. Catalyzes the synthesis of GMP from XMP. The sequence is that of GMP synthase [glutamine-hydrolyzing] from Symbiobacterium thermophilum (strain DSM 24528 / JCM 14929 / IAM 14863 / T).